Reading from the N-terminus, the 268-residue chain is MQTIAIKDFIDIKYIKQDQISEIIISRPQVLNAFRPRTINEIIAAFYDSREDSSIGVVILSGHGSRAFCVGGDQKIRSKTGYIDEKGRSSLNVLELQRIIRTFPKPVIAKVSGYAVGGGQILNMMCDLTIASENAVLGQSGPKVGSFDAGYGSAYMARIIGQKKARELWFTCYQYDAFEAYKMGLVNWVVKIEDLDSYAIKLATDILNKSPLAIRFLKSSLNADCDGQSGLQELAGYSTMLFYMSAEGQEGHRAFLENREPDFSKFNS.

Substrate is bound by residues 30–31, 70–74, 114–118, Ser140, and Ser146; these read VL, VGGDQ, and YAVGG. 139–141 lines the hydrogencarbonate pocket; sequence QSG.

This sequence belongs to the enoyl-CoA hydratase/isomerase family. MenB subfamily. It depends on hydrogencarbonate as a cofactor.

The protein resides in the plastid. It localises to the chloroplast. The catalysed reaction is 2-succinylbenzoyl-CoA + H(+) = 1,4-dihydroxy-2-naphthoyl-CoA + H2O. Its pathway is quinol/quinone metabolism; 1,4-dihydroxy-2-naphthoate biosynthesis; 1,4-dihydroxy-2-naphthoate from chorismate: step 6/7. It participates in quinol/quinone metabolism; menaquinone biosynthesis. Its function is as follows. Converts o-succinylbenzoyl-CoA (OSB-CoA) to 1,4-dihydroxy-2-naphthoyl-CoA (DHNA-CoA). The protein is 1,4-dihydroxy-2-naphthoyl-CoA synthase (menB) of Cyanidium caldarium (Red alga).